We begin with the raw amino-acid sequence, 400 residues long: MNEFEDLLNSVSQVETGDVVSAEVLTVDATQANVAISGTGVEGVLTLRELTNDRDADINDFVKVGEVLDVLVLRQVVGKDTDTVTYLVSKKRLEARKAWDKLVGREEEVVTVKGTRAVKGGLSVEFEGVRGFIPASMLDTRFVRNAERFVGQEFDTKIKEVNAKENRFILSRREVVEAATAAARAEVFGKLAVGDVVTGKVARITSFGAFIDLGGVDGLVHLTELSHERNVSPKSVVTVGEEIEVKILDLNEEEGRVSLSLKATVPGPWDGVEQKLAKGDVVEGTVKRLTDFGAFVEVLPGIDGLVHVSQISHKRIENPKEALKVGQEVQVKVLEVNADAERVSLSIKALEERPAQEEGQKEEKRAARPRRPRRQEKRDFELPETQTGFSMADLFGDIEL.

4 S1 motif domains span residues Gly17 to Leu87, Glu107 to Arg173, Gly194 to Lys262, and Gly279 to Lys348. Positions Glu351 to Ala366 are enriched in basic and acidic residues. Residues Glu351 to Leu400 are disordered.

Belongs to the bacterial ribosomal protein bS1 family. In terms of processing, phosphorylated.

Functionally, binds mRNA; thus facilitating recognition of the initiation point. It is needed to translate mRNA with a short Shine-Dalgarno (SD) purine-rich sequence. This is Small ribosomal subunit protein bS1 (rpsA) from Streptococcus pneumoniae (strain ATCC BAA-255 / R6).